Reading from the N-terminus, the 162-residue chain is ATP synthase subunit b (162 aa).

A helical membrane pass occupies residues 10–29 (LIWTIINFAVLLWGMHRFLY).

Belongs to the ATPase B chain family. In terms of assembly, F-type ATPases have 2 components, F(1) - the catalytic core - and F(0) - the membrane proton channel. F(1) has five subunits: alpha(3), beta(3), gamma(1), delta(1), epsilon(1). F(0) has three main subunits: a(1), b(2) and c(10-14). The alpha and beta chains form an alternating ring which encloses part of the gamma chain. F(1) is attached to F(0) by a central stalk formed by the gamma and epsilon chains, while a peripheral stalk is formed by the delta and b chains.

It localises to the cell membrane. F(1)F(0) ATP synthase produces ATP from ADP in the presence of a proton or sodium gradient. F-type ATPases consist of two structural domains, F(1) containing the extramembraneous catalytic core and F(0) containing the membrane proton channel, linked together by a central stalk and a peripheral stalk. During catalysis, ATP synthesis in the catalytic domain of F(1) is coupled via a rotary mechanism of the central stalk subunits to proton translocation. Functionally, component of the F(0) channel, it forms part of the peripheral stalk, linking F(1) to F(0). This Symbiobacterium thermophilum (strain DSM 24528 / JCM 14929 / IAM 14863 / T) protein is ATP synthase subunit b.